The primary structure comprises 148 residues: Macrodomain Ter protein (148 aa).

This sequence belongs to the MatP family. In terms of assembly, homodimer.

The protein resides in the cytoplasm. In terms of biological role, required for spatial organization of the terminus region of the chromosome (Ter macrodomain) during the cell cycle. Prevents early segregation of duplicated Ter macrodomains during cell division. Binds specifically to matS, which is a 13 bp signature motif repeated within the Ter macrodomain. The protein is Macrodomain Ter protein of Pasteurella multocida (strain Pm70).